A 97-amino-acid polypeptide reads, in one-letter code: Small ribosomal subunit protein bS20 (97 aa).

The protein belongs to the bacterial ribosomal protein bS20 family.

Its function is as follows. Binds directly to 16S ribosomal RNA. This chain is Small ribosomal subunit protein bS20, found in Prochlorococcus marinus subsp. pastoris (strain CCMP1986 / NIES-2087 / MED4).